A 360-amino-acid polypeptide reads, in one-letter code: Spermidine/putrescine-binding periplasmic protein 1 (360 aa).

An N-terminal signal peptide occupies residues 1–16 (MKKFAGLITASFVAAT).

Belongs to the bacterial solute-binding protein PotD/PotF family.

Its subcellular location is the periplasm. Required for the activity of the bacterial periplasmic transport system of putrescine and spermidine. Polyamine binding protein. The polypeptide is Spermidine/putrescine-binding periplasmic protein 1 (potD-B) (Haemophilus influenzae (strain ATCC 51907 / DSM 11121 / KW20 / Rd)).